The primary structure comprises 322 residues: F-actin-capping protein subunit beta (322 aa).

The protein belongs to the F-actin-capping protein beta subunit family. Component of the F-actin capping complex, composed of a heterodimer of an alpha and a beta subunit.

It is found in the cytoplasm. Its subcellular location is the cytoskeleton. It localises to the actin patch. In terms of biological role, F-actin-capping proteins bind in a Ca(2+)-independent manner to the fast growing ends of actin filaments (barbed end) thereby blocking the exchange of subunits at these ends. Unlike other capping proteins (such as gelsolin and severin), these proteins do not sever actin filaments. This chain is F-actin-capping protein subunit beta (cap2), found in Aspergillus fumigatus (strain ATCC MYA-4609 / CBS 101355 / FGSC A1100 / Af293) (Neosartorya fumigata).